A 280-amino-acid polypeptide reads, in one-letter code: MTKLGFTRSGGSKSGRTRRRLRRRLSGGVLLLIALTIAGGLAAVLTPTPQVAVADESSSALLRTGKQLFDTSCVSCHGANLQGVPDHGPSLIGVGEAAVYFQVSTGRMPAMRGEAQAPRKDPIFDEAQIDAIGAYVQANGGGPTVVRNPDGSIATQSLRGNDLGRGGDLFRLNCASCHNFTGKGGALSSGKYAPDLAPANEQQILTAMLTGPQNMPKFSNRQLSFEAKKDIIAYVKVATEARQPGGYLLGGFGPAPEGMAMWIIGMVAAIGLALWIGARS.

A helical transmembrane segment spans residues 25-45; it reads LSGGVLLLIALTIAGGLAAVL. 2 Cytochrome c domains span residues 60–140 and 161–239; these read ALLR…QANG and NDLG…KVAT. Heme c contacts are provided by cysteine 73, cysteine 76, histidine 77, cysteine 174, cysteine 177, and histidine 178. Residues 258–278 form a helical membrane-spanning segment; that stretch reads GMAMWIIGMVAAIGLALWIGA.

In terms of assembly, the cytochrome bc1 complex is composed of a cytochrome b (QcrB), the Rieske iron-sulfur protein (QcrA) and a diheme cytochrome c (QcrC) subunit. Binds 2 heme c groups covalently per subunit.

The protein localises to the cell membrane. The catalysed reaction is a quinol + 2 Fe(III)-[cytochrome c](out) = a quinone + 2 Fe(II)-[cytochrome c](out) + 2 H(+)(out). Its function is as follows. Cytochrome b subunit of the cytochrome bc1 complex, an essential component of the respiratory electron transport chain required for ATP synthesis. The bc1 complex catalyzes the oxidation of ubiquinol and the reduction of cytochrome c in the respiratory chain. The bc1 complex operates through a Q-cycle mechanism that couples electron transfer to generation of the proton gradient that drives ATP synthesis. The sequence is that of Cytochrome bc1 complex cytochrome c subunit (qcrC) from Mycobacterium bovis (strain ATCC BAA-935 / AF2122/97).